Reading from the N-terminus, the 616-residue chain is Chaperone protein HscA homolog (616 aa).

This sequence belongs to the heat shock protein 70 family.

Probable chaperone. Has a low intrinsic ATPase activity which is markedly stimulated by HscB. This is Chaperone protein HscA homolog from Vibrio cholerae serotype O1 (strain ATCC 39315 / El Tor Inaba N16961).